The chain runs to 261 residues: U11/U12 small nuclear ribonucleoprotein 31 kDa protein (261 aa).

Residues 18–51 form a disordered region; sequence YYRYSSVAAPPPSNPKHQPSSSAKSSAPGGGSGG. The RRM domain occupies 57 to 135; the sequence is STLYVSNLDF…RKLTVSIAAD (79 aa). The CCHC-type zinc-finger motif lies at 153-169; that stretch reads RCYECGDEGHLSYECPK. Residues 165 to 261 are disordered; sequence YECPKNQLGP…YFSDESDDED (97 aa). The span at 226-235 shows a compositional bias: basic and acidic residues; the sequence is AGERLRKREA.

Component of the U11/U12 snRNPs that are part of the U12-type spliceosome. Ubiquitous. Abundantly expressed in the shoot apical neristem.

Its subcellular location is the nucleus. Its function is as follows. RNA chaperone required for proper U12 intron splicing and for normal growth and development of plants. Mainly responsible for meristem activity. Plays a role in regulating cell division. The polypeptide is U11/U12 small nuclear ribonucleoprotein 31 kDa protein (SNRNP31) (Arabidopsis thaliana (Mouse-ear cress)).